Consider the following 353-residue polypeptide: tRNA U34 carboxymethyltransferase (353 aa).

Residues Lys-101, Trp-119, Lys-124, Gly-144, 166–168, 207–208, Met-227, Tyr-231, and Arg-346 contribute to the carboxy-S-adenosyl-L-methionine site; these read DPS and LE.

Belongs to the class I-like SAM-binding methyltransferase superfamily. CmoB family. As to quaternary structure, homotetramer.

The catalysed reaction is carboxy-S-adenosyl-L-methionine + 5-hydroxyuridine(34) in tRNA = 5-carboxymethoxyuridine(34) in tRNA + S-adenosyl-L-homocysteine + H(+). Catalyzes carboxymethyl transfer from carboxy-S-adenosyl-L-methionine (Cx-SAM) to 5-hydroxyuridine (ho5U) to form 5-carboxymethoxyuridine (cmo5U) at position 34 in tRNAs. In Psychrobacter sp. (strain PRwf-1), this protein is tRNA U34 carboxymethyltransferase.